A 567-amino-acid polypeptide reads, in one-letter code: Malate synthase, glyoxysomal (567 aa).

Catalysis depends on Arg182, which acts as the Proton acceptor. Catalysis depends on Asp468, which acts as the Proton donor. A Microbody targeting signal motif is present at residues 565 to 567 (SKL).

The protein belongs to the malate synthase family.

It localises to the glyoxysome. The catalysed reaction is glyoxylate + acetyl-CoA + H2O = (S)-malate + CoA + H(+). It participates in carbohydrate metabolism; glyoxylate cycle; (S)-malate from isocitrate: step 2/2. The chain is Malate synthase, glyoxysomal from Gossypium hirsutum (Upland cotton).